The following is a 309-amino-acid chain: Formimidoylglutamase (309 aa).

Residues H128, D153, H155, D157, C240, and D242 each coordinate Mn(2+).

Belongs to the arginase family. It depends on Mn(2+) as a cofactor.

It catalyses the reaction N-formimidoyl-L-glutamate + H2O = formamide + L-glutamate. Its pathway is amino-acid degradation; L-histidine degradation into L-glutamate; L-glutamate from N-formimidoyl-L-glutamate (hydrolase route): step 1/1. Catalyzes the conversion of N-formimidoyl-L-glutamate to L-glutamate and formamide. This chain is Formimidoylglutamase, found in Staphylococcus carnosus (strain TM300).